The primary structure comprises 186 residues: Riboflavin kinase (186 aa).

Mg(2+)-binding residues include T42 and N44. The Nucleophile role is filled by E123.

It belongs to the flavokinase family. Zn(2+) serves as cofactor. Requires Mg(2+) as cofactor.

It carries out the reaction riboflavin + ATP = FMN + ADP + H(+). Its pathway is cofactor biosynthesis; FMN biosynthesis; FMN from riboflavin (ATP route): step 1/1. Its function is as follows. Catalyzes the phosphorylation of riboflavin (vitamin B2) to form flavin mononucleotide (FMN) coenzyme. The sequence is that of Riboflavin kinase (FMN1) from Eremothecium gossypii (strain ATCC 10895 / CBS 109.51 / FGSC 9923 / NRRL Y-1056) (Yeast).